The primary structure comprises 198 residues: Inositol diphosphatase DSP4 (198 aa).

Residues 1-23 (MTLESYAGDVHTVPQSENSMEER) are disordered. The Tyrosine-protein phosphatase domain maps to 34-188 (NFAMVDNGIF…LKHTPLSFSC (155 aa)). The tract at residues 90 to 102 (FGIERCKEPFVNI) is WPD loop important for active site topology. 1D-myo-inositol hexakisphosphate-binding residues include N101 and I102. Residue C126 is the Phosphocysteine intermediate of the active site.

The protein belongs to the protein-tyrosine phosphatase family. Atypical dual-specificity phosphatase Siw14-like subfamily. In terms of tissue distribution, highly expressed in flowers and at lower levels in roots, leaves, stems and siliques.

It carries out the reaction 5-diphospho-1D-myo-inositol 1,2,3,4,6-pentakisphosphate + H2O = 1D-myo-inositol hexakisphosphate + phosphate + H(+). It catalyses the reaction 1,5-bis(diphospho)-1D-myo-inositol 2,3,4,6-tetrakisphosphate + H2O = 1-diphospho-1D-myo-inositol 2,3,4,5,6-pentakisphosphate + phosphate + 2 H(+). The enzyme catalyses 3,5-bis(diphospho)-1D-myo-inositol 1,2,4,6-tetrakisphosphate + H2O = 3-diphospho-1D-myo-inositol 1,2,4,5,6-pentakisphosphate + phosphate + 2 H(+). The catalysed reaction is 6-diphospho-1D-myo-inositol pentakisphosphate + H2O = 1D-myo-inositol hexakisphosphate + phosphate + H(+). Its function is as follows. Cleaves the beta-phosphate at the 5-position of soluble inositol pyrophosphates. Has highest activity on 5-diphosphoinositol 1,2,3,4,6-pentakisphosphate (5-InsP(7)), 1,5-bis-diphosphoinositol 2,3,4,6-tetrakisphosphate (1,5-InsP(8)) and 3,5-InsP(8). Acts as a negative regulator of defense responses against the bacterial pathogen Pseudomonas syringae pv tomato strain DC3000. The sequence is that of Inositol diphosphatase DSP4 from Arabidopsis thaliana (Mouse-ear cress).